A 485-amino-acid polypeptide reads, in one-letter code: Sodium-coupled neutral amino acid symporter 1 (485 aa).

The Cytoplasmic portion of the chain corresponds to 1–74 (MMHFKSGLEL…EYIPGTTSLG (74 aa)). Ser-6 is subject to Phosphoserine. Thr-11 is subject to Phosphothreonine. Residues Ser-25, Ser-28, Ser-49, and Ser-52 each carry the phosphoserine modification. Residue Thr-54 is modified to Phosphothreonine. Ser-56 carries the phosphoserine modification. The helical transmembrane segment at 75–97 (MSVFNLSNAIMGSGILGLAFALA) threads the bilayer. The Extracellular portion of the chain corresponds to 98–112 (NTGILLFLILLTSVT). The helical transmembrane segment at 113–133 (LLSIYSINLLLICSKETGCMV) threads the bilayer. The Cytoplasmic segment spans residues 134-148 (YEKLGEQVFGTTGKL). A helical membrane pass occupies residues 149–169 (VIFGATSLQNTGAMLSYLFIV). Residues 170–188 (KNELPSAIKSLMGEEDAFS) lie on the Extracellular side of the membrane. A helical transmembrane segment spans residues 189–211 (AWYVDGRVLVVMVTFGIILPLCL). At 212 to 216 (LKNLG) the chain is on the cytoplasmic side. Residues 217–237 (YLGYTSGFSLSCMMFFLIVVI) traverse the membrane as a helical segment. Residues 238-273 (YKKFQTPCMSVEQNSTVSANVTDACTPKYVTFNSKT) are Extracellular-facing. Cys-245 and Cys-262 are joined by a disulfide. 2 N-linked (GlcNAc...) asparagine glycosylation sites follow: Asn-251 and Asn-257. The helical transmembrane segment at 274 to 294 (VYALPTIAFAFVCHPSVLPIY) threads the bilayer. Topologically, residues 295–310 (SELKDRSQKKMQMVSN) are cytoplasmic. Residues 311–331 (ISFFAMFVMYFLTAIFGYLTF) form a helical membrane-spanning segment. Topologically, residues 332-348 (YEKVQSDLLHKYQSTGD) are extracellular. A helical transmembrane segment spans residues 349–369 (ILILTVRLAVIVAVILTVPVL). Topologically, residues 370-391 (FFTVRSSLFELAKKTKFHLCRH) are cytoplasmic. The chain crosses the membrane as a helical span at residues 392 to 412 (VLVTIILLIIINLLVIFIPSM). The Extracellular portion of the chain corresponds to 413-414 (KD). Residues 415-435 (IFGVVGVTSANMLIFILPSSL) traverse the membrane as a helical segment. At 436–450 (YLKITNQDGDKGTQR) the chain is on the cytoplasmic side. The chain crosses the membrane as a helical span at residues 451-471 (IWAALFLGLGVLFSLISIPLV). Topologically, residues 472–485 (IYDWACSSGTDEGH) are extracellular.

This sequence belongs to the amino acid/polyamine transporter 2 family. Post-translationally, N-glycosylation plays an important role in the L-glutamine transport. Specifically expressed in brain and retina (at protein level). Also detected in spleen, small intestine and lung.

Its subcellular location is the cell membrane. It carries out the reaction L-glutamine(in) + Na(+)(in) = L-glutamine(out) + Na(+)(out). The enzyme catalyses L-alanine(in) + Na(+)(in) = L-alanine(out) + Na(+)(out). The catalysed reaction is L-histidine(in) + Na(+)(in) = L-histidine(out) + Na(+)(out). It catalyses the reaction L-asparagine(in) + Na(+)(in) = L-asparagine(out) + Na(+)(out). It carries out the reaction L-serine(in) + Na(+)(in) = L-serine(out) + Na(+)(out). The enzyme catalyses L-cysteine(in) + Na(+)(in) = L-cysteine(out) + Na(+)(out). The catalysed reaction is L-methionine(in) + Na(+)(in) = L-methionine(out) + Na(+)(out). It catalyses the reaction glycine(in) + Na(+)(in) = glycine(out) + Na(+)(out). It carries out the reaction L-threonine(in) + Na(+)(in) = L-threonine(out) + Na(+)(out). The enzyme catalyses L-proline(in) + Na(+)(in) = L-proline(out) + Na(+)(out). Its activity is regulated as follows. Inhibited by alpha-(methylamino)isobutyric acid (MeAIB). Inhibited by lithium, potassium, choline ions, N-methylglucamine. The pH dependence has an allosteric effect on the transport. Symporter that cotransports short-chain neutral amino acids and sodium ions from the extraccellular to the intracellular side of the cell membrane. The transport is elctrogenic, pH dependent and driven by the Na(+) electrochemical gradient. Participates in the astroglia-derived glutamine transport into GABAergic interneurons for neurotransmitter GABA de novo synthesis. May also contributes to amino acid transport in placental trophoblast. Regulates synaptic plasticity. This chain is Sodium-coupled neutral amino acid symporter 1, found in Mus musculus (Mouse).